The sequence spans 870 residues: Lon protease (870 aa).

Positions 1-270 (MPTNSYRFLV…KLYEHIHTFA (270 aa)) constitute a Lon N-terminal domain. 454 to 461 (GPPGTGKT) provides a ligand contact to ATP. The Lon proteolytic domain occupies 691–870 (SPQIGTVTGL…YQQIYDFIFK (180 aa)). Residues S777 and K820 contribute to the active site.

Belongs to the peptidase S16 family. As to quaternary structure, homohexamer. Organized in a ring with a central cavity.

The protein localises to the cytoplasm. It catalyses the reaction Hydrolysis of proteins in presence of ATP.. In terms of biological role, ATP-dependent serine protease that mediates the selective degradation of mutant and abnormal proteins as well as certain short-lived regulatory proteins. Required for cellular homeostasis and for survival from DNA damage and developmental changes induced by stress. Degrades polypeptides processively to yield small peptide fragments that are 5 to 10 amino acids long. Binds to DNA in a double-stranded, site-specific manner. The chain is Lon protease from Mesomycoplasma hyopneumoniae (strain 232) (Mycoplasma hyopneumoniae).